Reading from the N-terminus, the 336-residue chain is DNA repair protein XRCC4 (336 aa).

The interval 1–213 (MERKISRIHL…EREKDIKQEG (213 aa)) is interaction with IFFO1. Ser53 carries the post-translational modification Phosphoserine; by PRKDC. 2 coiled-coil regions span residues 131–165 (LDTI…FEKC) and 184–212 (LNEK…IKQE). The tract at residues 180–213 (FILVLNEKKTKIRSLHNKLLNAAQEREKDIKQEG) is interaction with LIG4. The residue at position 193 (Ser193) is a Phosphoserine; by PRKDC. Lys210 participates in a covalent cross-link: Glycyl lysine isopeptide (Lys-Gly) (interchain with G-Cter in SUMO). Residues 212 to 249 (EGETAICSEMTADRDPVYDESTDEESENQTDLSGLASA) are disordered. Tyr229 bears the Phosphotyrosine mark. The segment covering 229 to 239 (YDESTDEESEN) has biased composition (acidic residues). The residue at position 232 (Ser232) is a Phosphoserine. At Thr233 the chain carries Phosphothreonine; by CK2. Residues Ser237 and Ser256 each carry the phosphoserine modification. At Ser260 the chain carries Phosphoserine; by PRKDC. The segment at 264–336 (TDIAPSRKRR…SSPEDLFDEI (73 aa)) is disordered. The Nuclear localization signal signature appears at 270–275 (RKRRQR). Lys296 is covalently cross-linked (Glycyl lysine isopeptide (Lys-Gly) (interchain with G-Cter in ubiquitin)). 4 positions are modified to phosphoserine; by PRKDC: Ser303, Ser304, Ser315, and Ser320. Positions 317–329 (ENMSLETLRNSSP) are enriched in polar residues. The residue at position 323 (Thr323) is a Phosphothreonine; by PRKDC. Phosphoserine; by PRKDC is present on residues Ser327 and Ser328.

This sequence belongs to the XRCC4-XLF family. XRCC4 subfamily. In terms of assembly, homodimer and homotetramer in solution. Interacts with NHEJ1/XLF; the interaction is direct and is mediated via a head-to-head interaction between N-terminal head regions. Interacts with LIG4; the LIG4-XRCC4 subcomplex has a 1:2 stoichiometry and XRCC4 is required for LIG4 stability. Component of the core long-range non-homologous end joining (NHEJ) complex (also named DNA-PK complex) composed of PRKDC, LIG4, XRCC4, XRCC6/Ku70, XRCC5/Ku86 and NHEJ1/XLF. Additional component of the NHEJ complex includes PAXX. Following autophosphorylation, PRKDC dissociates from DNA, leading to formation of the short-range NHEJ complex, composed of LIG4, XRCC4, XRCC6/Ku70, XRCC5/Ku86 and NHEJ1/XLF. Interacts with PRKDC; the interaction is direct. Interacts with XRCC6/Ku70; the interaction is direct. Interacts with APTX and APLF. Forms a heterotetramer with IFFO1; the interaction involves LIG4-free XRCC4 and leads to the relocalization of IFFO1 to the sites of DNA damage. Interacts with PNKP; mainly interacts with PNKP when phosphorylated at Thr-233, but is also able to interact at much lower level with PNKP when not unphosphorylated. Interacts with POLL (DNA polymerase lambda). As to quaternary structure, interacts with XKR4; interacts with the processed form of XKR4, which is cleaved by caspase. Phosphorylated by PRKDC at the C-terminus in response to DNA damage; Ser-260 and Ser-320 constitute the main phosphorylation sites. Phosphorylations by PRKDC at the C-terminus of XRCC4 and NHEJ1/XLF are highly redundant and regulate ability of the XRCC4-NHEJ1/XLF subcomplex to bridge DNA. Phosphorylation by PRKDC does not prevent interaction with NHEJ1/XLF but disrupts ability to bridge DNA and promotes detachment from DNA. Phosphorylation at Ser-327 and Ser-328 by PRKDC promotes recognition by the SCF(FBXW7) complex and subsequent ubiquitination via 'Lys-63'-linked ubiquitin. Phosphorylation at Thr-233 by CK2 promotes interaction with PNKP; regulating PNKP activity and localization to DNA damage sites. Phosphorylation by CK2 promotes interaction with APTX. Post-translationally, ubiquitinated at Lys-296 by the SCF(FBXW7) complex via 'Lys-63'-linked ubiquitination, thereby promoting double-strand break repair: the SCF(FBXW7) complex specifically recognizes XRCC4 when phosphorylated at Ser-327 and Ser-328 by PRKDC, and 'Lys-63'-linked ubiquitination facilitates DNA non-homologous end joining (NHEJ) by enhancing association with XRCC5/Ku80 and XRCC6/Ku70. Monoubiquitinated. In terms of processing, undergoes proteolytic processing by caspase-3 (CASP3). This generates the protein XRCC4, C-terminus (XRCC4/C), which translocates to the cytoplasm and activates phospholipid scramblase activity of XKR4, thereby promoting phosphatidylserine exposure on apoptotic cell surface. In terms of tissue distribution, widely expressed.

The protein resides in the nucleus. It localises to the chromosome. It is found in the cytoplasm. In terms of biological role, DNA non-homologous end joining (NHEJ) core factor, required for double-strand break repair and V(D)J recombination. Acts as a scaffold protein that regulates recruitment of other proteins to DNA double-strand breaks (DSBs). Associates with NHEJ1/XLF to form alternating helical filaments that bridge DNA and act like a bandage, holding together the broken DNA until it is repaired. The XRCC4-NHEJ1/XLF subcomplex binds to the DNA fragments of a DSB in a highly diffusive manner and robustly bridges two independent DNA molecules, holding the broken DNA fragments in close proximity to one other. The mobility of the bridges ensures that the ends remain accessible for further processing by other repair factors. Plays a key role in the NHEJ ligation step of the broken DNA during DSB repair via direct interaction with DNA ligase IV (LIG4): the LIG4-XRCC4 subcomplex reseals the DNA breaks after the gap filling is completed. XRCC4 stabilizes LIG4, regulates its subcellular localization and enhances LIG4's joining activity. Binding of the LIG4-XRCC4 subcomplex to DNA ends is dependent on the assembly of the DNA-dependent protein kinase complex DNA-PK to these DNA ends. Promotes displacement of PNKP from processed strand break termini. Acts as an activator of the phospholipid scramblase activity of XKR4. This form, which is generated upon caspase-3 (CASP3) cleavage, translocates into the cytoplasm and interacts with XKR4, thereby promoting phosphatidylserine scramblase activity of XKR4 and leading to phosphatidylserine exposure on apoptotic cell surface. The polypeptide is DNA repair protein XRCC4 (Homo sapiens (Human)).